Here is a 534-residue protein sequence, read N- to C-terminus: Neryl diphosphate diphosphatase, chloroplastic (534 aa).

4 residues coordinate Mg(2+): Asp272, Asp276, Asp416, and Glu424. A DDXXD motif motif is present at residues 272–276 (DDIFD).

Belongs to the terpene synthase family. It depends on Mg(2+) as a cofactor.

The protein resides in the plastid. Its subcellular location is the chloroplast. It carries out the reaction neryl diphosphate + H2O = nerol + diphosphate. Its pathway is secondary metabolite biosynthesis; terpenoid biosynthesis. Monoterpene synthase that catalyzes the hydrolysis of neryl diphosphate (NPP) to form nerol and diphosphate. Is specific for NPP and has no hydrolase activity toward geranyl diphosphate (GPP) or farnesyl diphosphate (FPP). The monoterpene nerol may have an insect repellent effect for the plant leaves. The chain is Neryl diphosphate diphosphatase, chloroplastic from Glycine max (Soybean).